A 280-amino-acid chain; its full sequence is Dual adapter for phosphotyrosine and 3-phosphotyrosine and 3-phosphoinositide (280 aa).

The region spanning 35 to 129 (WYHGNLTRHA…GTLMVLKHPY (95 aa)) is the SH2 domain. Tyrosine 139 is modified (phosphotyrosine). The residue at position 141 (serine 141) is a Phosphoserine. Residues 164–259 (LGTKEGYLTK…WIKILRWKLS (96 aa)) enclose the PH domain.

In terms of assembly, interacts with PtdIns(3,4,5)P3 and PLCG2. Post-translationally, phosphorylated on tyrosine residues.

It is found in the cytoplasm. The protein resides in the membrane. Its function is as follows. May act as a B-cell-associated adapter that regulates B-cell antigen receptor (BCR)-signaling downstream of PI3K. The chain is Dual adapter for phosphotyrosine and 3-phosphotyrosine and 3-phosphoinositide (Dapp1) from Mus musculus (Mouse).